The sequence spans 217 residues: Ras-related protein Rab-19 (217 aa).

S26, V28, G29, K30, T31, C32, Y42, S43, E44, S45, and T49 together coordinate GTP. Mg(2+) is bound at residue T31. A Switch 1 motif is present at residues 39 to 54 (SGVYSESQQNTIGVDF). Mg(2+) is bound by residues T49 and D72. The Switch 2 signature appears at 74–89 (AGQERFRTITQSYYRS). Positions 75, 130, 131, 133, 161, 162, and 163 each coordinate GTP. 2 S-geranylgeranyl cysteine lipidation sites follow: C215 and C217. The residue at position 217 (C217) is a Cysteine methyl ester.

Belongs to the small GTPase superfamily. Rab family. The cofactor is Mg(2+).

The protein localises to the cell membrane. The catalysed reaction is GTP + H2O = GDP + phosphate + H(+). Regulated by guanine nucleotide exchange factors (GEFs) which promote the exchange of bound GDP for free GTP. Regulated by GTPase activating proteins (GAPs) which increase the GTP hydrolysis activity. Inhibited by GDP dissociation inhibitors (GDIs). Functionally, the small GTPases Rab are key regulators of intracellular membrane trafficking, from the formation of transport vesicles to their fusion with membranes. Rabs cycle between an inactive GDP-bound form and an active GTP-bound form that is able to recruit to membranes different set of downstream effectors directly responsible for vesicle formation, movement, tethering and fusion. In Rattus norvegicus (Rat), this protein is Ras-related protein Rab-19.